Reading from the N-terminus, the 366-residue chain is uncharacterized protein (366 aa).

6 consecutive transmembrane segments (helical) span residues 30-50 (FWTY…AVGI), 66-86 (IIIA…IIVI), 136-156 (IFIS…GYLA), 162-182 (IILF…LDLL), 198-218 (IGVV…IYDI), and 225-245 (YIPE…IIDV).

Its subcellular location is the cell membrane. This is an uncharacterized protein from Methanocaldococcus jannaschii (strain ATCC 43067 / DSM 2661 / JAL-1 / JCM 10045 / NBRC 100440) (Methanococcus jannaschii).